The primary structure comprises 592 residues: Putative nucleoside-triphosphatase (592 aa).

E200 (proton acceptor) is an active-site residue.

Belongs to the GDA1/CD39 NTPase family.

The catalysed reaction is a ribonucleoside 5'-triphosphate + H2O = a ribonucleoside 5'-diphosphate + phosphate + H(+). In Toxoplasma gondii, this protein is Putative nucleoside-triphosphatase (NTP4).